Consider the following 407-residue polypeptide: Peptide chain release factor subunit 1 (407 aa).

Belongs to the eukaryotic release factor 1 family. In terms of assembly, heterodimer of two subunits, one of which binds GTP.

The protein resides in the cytoplasm. In terms of biological role, directs the termination of nascent peptide synthesis (translation) in response to the termination codons UAA, UAG and UGA. The polypeptide is Peptide chain release factor subunit 1 (prf1) (Archaeoglobus fulgidus (strain ATCC 49558 / DSM 4304 / JCM 9628 / NBRC 100126 / VC-16)).